Consider the following 1373-residue polypeptide: Insulin-like growth factor 1 receptor (1373 aa).

The first 30 residues, 1 to 30 (MKSGSGGGSPTSLWGLVFLSAALSLWPTSG), serve as a signal peptide directing secretion. Cysteines 33 and 52 form a disulfide. 3 N-linked (GlcNAc...) asparagine glycosylation sites follow: Asn51, Asn102, and Asn135. Intrachain disulfides connect Cys150–Cys178, Cys182–Cys205, Cys192–Cys211, Cys215–Cys224, Cys219–Cys230, Cys231–Cys239, Cys235–Cys248, Cys251–Cys260, Cys264–Cys276, Cys282–Cys303, Cys307–Cys321, Cys324–Cys328, and Cys332–Cys354. Asn245 carries N-linked (GlcNAc...) asparagine glycosylation. Residue Asn314 is glycosylated (N-linked (GlcNAc...) asparagine). Asn418 and Asn439 each carry an N-linked (GlcNAc...) asparagine glycan. Cys456 and Cys489 are oxidised to a cystine. Fibronectin type-III domains lie at 490-610 (ESDV…TNAS), 611-709 (VPSI…TEAE), 735-829 (RPER…TMPA), and 835-928 (IPGP…VPAK). N-linked (GlcNAc...) asparagine glycans are attached at residues Asn535, Asn608, Asn623, Asn641, Asn748, Asn757, Asn765, Asn901, and Asn914. Residues 742–936 (DVMQVANTTM…AKTTYENFMH (195 aa)) lie on the Extracellular side of the membrane. Residues 937-960 (LIIALPVAILLIVGGLVIMLYVFH) form a helical membrane-spanning segment. Residues 961 to 1373 (RKRNNSRLGN…ALPLPQSSTC (413 aa)) lie on the Cytoplasmic side of the membrane. Positions 978–981 (NPEY) match the IRS1- and SHC1-binding motif. Phosphotyrosine is present on Tyr981. One can recognise a Protein kinase domain in the interval 1000-1276 (ITMNRELGQG…SIKDEMEPSF (277 aa)). ATP contacts are provided by residues 1006–1014 (LGQGSFGMV) and Lys1034. Asp1137 acts as the Proton acceptor in catalysis. Phosphotyrosine; by autocatalysis occurs at positions 1163, 1167, and 1168. Glycyl lysine isopeptide (Lys-Gly) (interchain with G-Cter in ubiquitin) cross-links involve residues Lys1170 and Lys1173. Ser1280 bears the Phosphoserine; by GSK3-beta mark. The interval 1283-1373 (YSEENKPPEP…ALPLPQSSTC (91 aa)) is disordered. Phosphoserine is present on Ser1284. Positions 1292–1305 (PEELEMELEMEPEN) are enriched in acidic residues. Positions 1306–1322 (MESVPLDPSASSASLPL) are enriched in low complexity. Basic and acidic residues predominate over residues 1323-1332 (PERHSGHKAE).

Belongs to the protein kinase superfamily. Tyr protein kinase family. Insulin receptor subfamily. As to quaternary structure, tetramer of 2 alpha and 2 beta chains linked by disulfide bonds. The alpha chains contribute to the formation of the ligand-binding domain, while the beta chain carries the kinase domain. Interacts with PIK3R1 and with the PTB/PID domains of IRS1 and SHC1 in vitro when autophosphorylated on tyrosine residues. Forms a hybrid receptor with INSR, the hybrid is a tetramer consisting of 1 alpha chain and 1 beta chain of INSR and 1 alpha chain and 1 beta chain of IGF1R. Interacts with ARRB1 and ARRB2. Interacts with GRB10. Interacts with RACK1. Interacts with SOCS1, SOCS2 and SOCS3. Interacts with 14-3-3 proteins. Interacts with NMD2. Interacts with MAP3K5. Interacts with STAT3. Found in a ternary complex with IGF1 and ITGAV:ITGB3 or ITGA6:ITGB4. Interacts (nascent precursor form) with ZFAND2B. Autophosphorylated on tyrosine residues in response to ligand binding. Autophosphorylation occurs in trans, i.e. one subunit of the dimeric receptor phosphorylates tyrosine residues on the other subunit. Autophosphorylation occurs in a sequential manner; Tyr-1167 is predominantly phosphorylated first, followed by phosphorylation of Tyr-1163 and Tyr-1168. While every single phosphorylation increases kinase activity, all three tyrosine residues in the kinase activation loop (Tyr-1163, Tyr-1167 and Tyr-1168) have to be phosphorylated for optimal activity. Can be autophosphorylated at additional tyrosine residues (in vitro). Autophosphorylated is followed by phosphorylation of juxtamembrane tyrosines and C-terminal serines. May also be phosphorylated at Tyr-1163 and Tyr-1168 by mTORC2. Phosphorylation of Tyr-981 is required for IRS1- and SHC1-binding. Phosphorylation of Ser-1280 by GSK-3beta restrains kinase activity and promotes cell surface expression, it requires a priming phosphorylation at Ser-1284. Dephosphorylated by PTPN1. In terms of processing, polyubiquitinated at Lys-1170 and Lys-1173 through both 'Lys-48' and 'Lys-29' linkages, promoting receptor endocytosis and subsequent degradation by the proteasome. Ubiquitination is facilitated by pre-existing phosphorylation. Post-translationally, sumoylated with SUMO1. Controlled by regulated intramembrane proteolysis (RIP). Undergoes metalloprotease-dependent constitutive ectodomain shedding to produce a membrane-anchored 52 kDa C-Terminal fragment which is further processed by presenilin gamma-secretase to yield an intracellular 50 kDa fragment.

The protein localises to the cell membrane. It carries out the reaction L-tyrosyl-[protein] + ATP = O-phospho-L-tyrosyl-[protein] + ADP + H(+). With respect to regulation, activated by autophosphorylation at Tyr-1163, Tyr-1167 and Tyr-1168 on the kinase activation loop; phosphorylation at all three tyrosine residues is required for optimal kinase activity. Inhibited by MSC1609119A-1, BMS-754807, PQIP, benzimidazole pyridinone, isoquinolinedione, bis-azaindole, 3-cyanoquinoline, 2,4-bis-arylamino-1,3-pyrimidine, pyrrolopyrimidine, pyrrole-5-carboxaldehyde, picropodophyllin (PPP), tyrphostin derivatives. While most inhibitors bind to the ATP binding pocket, MSC1609119A-1 functions as allosteric inhibitor and binds close to the DFG motif and the activation loop. Its function is as follows. Receptor tyrosine kinase which mediates actions of insulin-like growth factor 1 (IGF1). Binds IGF1 with high affinity and IGF2 and insulin (INS) with a lower affinity. The activated IGF1R is involved in cell growth and survival control. IGF1R is crucial for tumor transformation and survival of malignant cell. Ligand binding activates the receptor kinase, leading to receptor autophosphorylation, and tyrosines phosphorylation of multiple substrates, that function as signaling adapter proteins including, the insulin-receptor substrates (IRS1/2), Shc and 14-3-3 proteins. Phosphorylation of IRSs proteins lead to the activation of two main signaling pathways: the PI3K-AKT/PKB pathway and the Ras-MAPK pathway. The result of activating the MAPK pathway is increased cellular proliferation, whereas activating the PI3K pathway inhibits apoptosis and stimulates protein synthesis. Phosphorylated IRS1 can activate the 85 kDa regulatory subunit of PI3K (PIK3R1), leading to activation of several downstream substrates, including protein AKT/PKB. AKT phosphorylation, in turn, enhances protein synthesis through mTOR activation and triggers the antiapoptotic effects of IGFIR through phosphorylation and inactivation of BAD. In parallel to PI3K-driven signaling, recruitment of Grb2/SOS by phosphorylated IRS1 or Shc leads to recruitment of Ras and activation of the ras-MAPK pathway. In addition to these two main signaling pathways IGF1R signals also through the Janus kinase/signal transducer and activator of transcription pathway (JAK/STAT). Phosphorylation of JAK proteins can lead to phosphorylation/activation of signal transducers and activators of transcription (STAT) proteins. In particular activation of STAT3, may be essential for the transforming activity of IGF1R. The JAK/STAT pathway activates gene transcription and may be responsible for the transforming activity. JNK kinases can also be activated by the IGF1R. IGF1 exerts inhibiting activities on JNK activation via phosphorylation and inhibition of MAP3K5/ASK1, which is able to directly associate with the IGF1R. When present in a hybrid receptor with INSR, binds IGF1. This Mus musculus (Mouse) protein is Insulin-like growth factor 1 receptor (Igf1r).